We begin with the raw amino-acid sequence, 174 residues long: Large ribosomal subunit protein uL6 (174 aa).

The protein belongs to the universal ribosomal protein uL6 family. In terms of assembly, part of the 50S ribosomal subunit.

This protein binds to the 23S rRNA, and is important in its secondary structure. It is located near the subunit interface in the base of the L7/L12 stalk, and near the tRNA binding site of the peptidyltransferase center. In Acidithiobacillus ferrooxidans (strain ATCC 23270 / DSM 14882 / CIP 104768 / NCIMB 8455) (Ferrobacillus ferrooxidans (strain ATCC 23270)), this protein is Large ribosomal subunit protein uL6.